The following is a 159-amino-acid chain: Neuroglobin-2 (159 aa).

The 149-residue stretch at 3–151 (KLTEKDKELI…VVAAMSRGWA (149 aa)) folds into the Globin domain. Residues His-66 and His-98 each coordinate heme b.

This sequence belongs to the globin family. Monomer. Homodimers and homotetramers. Mainly monomeric but also detected as part of homodimers and homotetramers.

It localises to the cytoplasm. The protein resides in the cytosol. Its subcellular location is the mitochondrion matrix. The catalysed reaction is Fe(III)-heme b-[protein] + nitric oxide + H2O = Fe(II)-heme b-[protein] + nitrite + 2 H(+). In terms of biological role, monomeric globin with a bis-histidyl six-coordinate heme-iron atom through which it can bind dioxygen, carbon monoxide and nitric oxide. Could help transport oxygen and increase its availability to the metabolically active neuronal tissues, though its low quantity in tissues as well as its high affinity for dioxygen, which may limit its oxygen-releasing ability, argue against it. The ferrous/deoxygenated form exhibits a nitrite reductase activity and it could produce nitric oxide which in turn inhibits cellular respiration in response to hypoxia. In its ferrous/deoxygenated state, it may also exhibit GDI (Guanine nucleotide Dissociation Inhibitor) activity toward heterotrimeric G-alpha proteins, thereby regulating signal transduction to facilitate neuroprotective responses in the wake of hypoxia and associated oxidative stress. In Oncorhynchus mykiss (Rainbow trout), this protein is Neuroglobin-2 (ngb2).